The primary structure comprises 321 residues: UPF0026 protein MJ1312 (321 aa).

Residues 11–236 (RRLGKSLGIN…AIFNEIIGKN (226 aa)) form the Radical SAM core domain. The [4Fe-4S] cluster site is built by Cys-27, Cys-31, and Cys-34.

It belongs to the UPF0026 family. [4Fe-4S] cluster is required as a cofactor.

The chain is UPF0026 protein MJ1312 from Methanocaldococcus jannaschii (strain ATCC 43067 / DSM 2661 / JAL-1 / JCM 10045 / NBRC 100440) (Methanococcus jannaschii).